Consider the following 551-residue polypeptide: MGKIKKLDKNVVSRIAAGEAVAGPFSVVKELVENALDASATKIEIEILNGGKSYIKVKDNGEGMSRDDLLLSIEEHTTSKIEDFEDIYNLYSFGFRGEALSSISKVSKLVITSNDGKESNRLEVIGGKIKDIKEYPTSEKGTIVEVYDLFFNVPARRKFLKSDNVEKRYVVEYVEKFLLGNPDVEIVLKSDGEVVYNAVKGNLEDRFRLIFPEVREFTEVSGKYVKGIISSPSYYRNNRTGQIFFVQKRFVIDKMLYYIFETGYGEALLKHPYGVLFIEVPPRFVDVNVHPQKLEVKFSNPNVIYSDITRTVREGIKKFVSKKIFVKKEQNTVNENKLNYAYGPKSKPFQTNIEKNMLFNVEKKQLEVKRDIVVLKKRYVLFESNDGIYIMDFHAAHERILYDNIIKQLDEKVERLDLMIPIEIKIGKSFLQIAEGRKEDFKRFGFNIKIDKEKIIVLSIPSFIKPSDVVEVLMEILDEYRILGENPKSMKHIIADKACKKAVKTGYDILESEAKQLVEEVLKRGLTTCPHGRPLFLKITYKELDSFFERT.

The protein belongs to the DNA mismatch repair MutL/HexB family.

This protein is involved in the repair of mismatches in DNA. It is required for dam-dependent methyl-directed DNA mismatch repair. May act as a 'molecular matchmaker', a protein that promotes the formation of a stable complex between two or more DNA-binding proteins in an ATP-dependent manner without itself being part of a final effector complex. This Thermosipho melanesiensis (strain DSM 12029 / CIP 104789 / BI429) protein is DNA mismatch repair protein MutL.